The primary structure comprises 283 residues: Transmembrane protein 45B (283 aa).

7 consecutive transmembrane segments (helical) span residues 7–27, 55–75, 99–119, 121–141, 153–173, 187–207, and 218–238; these read HALP…KCPF, LIEG…EQFV, MYLF…SHHV, VGLD…LFYF, IHSL…MEVF, LAIL…PLSG, and IMFI…IVGI. Residues 261–283 form a disordered region; it reads GLRKSTSTDSSSQKALLQESDEE. Residues 264–275 are compositionally biased toward polar residues; it reads KSTSTDSSSQKA.

This sequence belongs to the TMEM45 family.

It localises to the membrane. This is Transmembrane protein 45B (tmem45b) from Danio rerio (Zebrafish).